Here is a 235-residue protein sequence, read N- to C-terminus: Proteasome subunit alpha type-2-B (235 aa).

Lysine 64 is covalently cross-linked (Glycyl lysine isopeptide (Lys-Gly) (interchain with G-Cter in ubiquitin)).

It belongs to the peptidase T1A family. Component of the 20S core complex of the 26S proteasome. The 26S proteasome is composed of a core protease (CP), known as the 20S proteasome, capped at one or both ends by the 19S regulatory particle (RP/PA700). The 20S proteasome core is composed of 28 subunits that are arranged in four stacked rings, resulting in a barrel-shaped structure. The two end rings are each formed by seven alpha subunits, and the two central rings are each formed by seven beta subunits. The catalytic chamber with the active sites is on the inside of the barrel.

It localises to the cytoplasm. Its subcellular location is the nucleus. In terms of biological role, the proteasome is a multicatalytic proteinase complex which is characterized by its ability to cleave peptides with Arg, Phe, Tyr, Leu, and Glu adjacent to the leaving group at neutral or slightly basic pH. The proteasome has an ATP-dependent proteolytic activity. The protein is Proteasome subunit alpha type-2-B (PAB2) of Arabidopsis thaliana (Mouse-ear cress).